We begin with the raw amino-acid sequence, 369 residues long: Cobalt-precorrin-5B C(1)-methyltransferase (369 aa).

Belongs to the CbiD family.

The enzyme catalyses Co-precorrin-5B + S-adenosyl-L-methionine = Co-precorrin-6A + S-adenosyl-L-homocysteine. It participates in cofactor biosynthesis; adenosylcobalamin biosynthesis; cob(II)yrinate a,c-diamide from sirohydrochlorin (anaerobic route): step 6/10. In terms of biological role, catalyzes the methylation of C-1 in cobalt-precorrin-5B to form cobalt-precorrin-6A. The protein is Cobalt-precorrin-5B C(1)-methyltransferase of Prosthecochloris aestuarii (strain DSM 271 / SK 413).